The sequence spans 273 residues: Putative phosphoenolpyruvate synthase regulatory protein (273 aa).

Residue 153–160 participates in ADP binding; that stretch reads AVSRAGKT.

This sequence belongs to the pyruvate, phosphate/water dikinase regulatory protein family. PSRP subfamily.

The enzyme catalyses [pyruvate, water dikinase] + ADP = [pyruvate, water dikinase]-phosphate + AMP + H(+). The catalysed reaction is [pyruvate, water dikinase]-phosphate + phosphate + H(+) = [pyruvate, water dikinase] + diphosphate. Functionally, bifunctional serine/threonine kinase and phosphorylase involved in the regulation of the phosphoenolpyruvate synthase (PEPS) by catalyzing its phosphorylation/dephosphorylation. The chain is Putative phosphoenolpyruvate synthase regulatory protein from Stenotrophomonas maltophilia (strain K279a).